The following is a 420-amino-acid chain: Serine hydroxymethyltransferase (420 aa).

(6S)-5,6,7,8-tetrahydrofolate contacts are provided by residues Leu121 and 125–127 (GHL). Lys230 is modified (N6-(pyridoxal phosphate)lysine). Residues Glu246 and 354–356 (SPF) contribute to the (6S)-5,6,7,8-tetrahydrofolate site.

Belongs to the SHMT family. In terms of assembly, homodimer. Pyridoxal 5'-phosphate serves as cofactor.

The protein resides in the cytoplasm. It catalyses the reaction (6R)-5,10-methylene-5,6,7,8-tetrahydrofolate + glycine + H2O = (6S)-5,6,7,8-tetrahydrofolate + L-serine. It participates in one-carbon metabolism; tetrahydrofolate interconversion. It functions in the pathway amino-acid biosynthesis; glycine biosynthesis; glycine from L-serine: step 1/1. In terms of biological role, catalyzes the reversible interconversion of serine and glycine with tetrahydrofolate (THF) serving as the one-carbon carrier. This reaction serves as the major source of one-carbon groups required for the biosynthesis of purines, thymidylate, methionine, and other important biomolecules. Also exhibits THF-independent aldolase activity toward beta-hydroxyamino acids, producing glycine and aldehydes, via a retro-aldol mechanism. The protein is Serine hydroxymethyltransferase of Rickettsia canadensis (strain McKiel).